The chain runs to 399 residues: S-adenosylmethionine synthase (399 aa).

An ATP-binding site is contributed by 135–140 (GEGSTD).

Belongs to the AdoMet synthase 2 family. It depends on Mg(2+) as a cofactor.

It carries out the reaction L-methionine + ATP + H2O = S-adenosyl-L-methionine + phosphate + diphosphate. It participates in amino-acid biosynthesis; S-adenosyl-L-methionine biosynthesis; S-adenosyl-L-methionine from L-methionine: step 1/1. In terms of biological role, catalyzes the formation of S-adenosylmethionine from methionine and ATP. This Archaeoglobus fulgidus (strain ATCC 49558 / DSM 4304 / JCM 9628 / NBRC 100126 / VC-16) protein is S-adenosylmethionine synthase (mat).